The primary structure comprises 160 residues: Non-secretory ribonuclease (160 aa).

An N-terminal signal peptide occupies residues 1–27 (MVPKLFTSPICLLLLLGLMGVEGSLHA). Tryptophan 34 is a glycosylation site (C-linked (Man) tryptophan). Residue histidine 42 is the Proton acceptor of the active site. N-linked (GlcNAc...) asparagine glycosylation occurs at asparagine 44. 4 disulfide bridges follow: cysteine 50–cysteine 110, cysteine 64–cysteine 122, cysteine 82–cysteine 137, and cysteine 89–cysteine 98. 3'-nitrotyrosine is present on tyrosine 60. 65–69 (KNQNT) contributes to the substrate binding site. N-linked (GlcNAc...) asparagine glycosylation is found at asparagine 92, asparagine 111, and asparagine 138. The Proton donor role is filled by histidine 155.

Belongs to the pancreatic ribonuclease family. As to quaternary structure, interacts with and forms a tight 1:1 complex with RNH1. Dimerization of two such complexes may occur.

It localises to the lysosome. The protein resides in the cytoplasmic granule. The catalysed reaction is an [RNA] containing cytidine + H2O = an [RNA]-3'-cytidine-3'-phosphate + a 5'-hydroxy-ribonucleotide-3'-[RNA].. It carries out the reaction an [RNA] containing uridine + H2O = an [RNA]-3'-uridine-3'-phosphate + a 5'-hydroxy-ribonucleotide-3'-[RNA].. Its function is as follows. This is a non-secretory ribonuclease. It is a pyrimidine specific nuclease with a slight preference for U. Cytotoxin and helminthotoxin. Possesses a wide variety of biological activities. The polypeptide is Non-secretory ribonuclease (RNASE2) (Papio hamadryas (Hamadryas baboon)).